A 238-amino-acid polypeptide reads, in one-letter code: tRNA1(Val) (adenine(37)-N6)-methyltransferase (238 aa).

It belongs to the methyltransferase superfamily. tRNA (adenine-N(6)-)-methyltransferase family.

Its subcellular location is the cytoplasm. It catalyses the reaction adenosine(37) in tRNA1(Val) + S-adenosyl-L-methionine = N(6)-methyladenosine(37) in tRNA1(Val) + S-adenosyl-L-homocysteine + H(+). Functionally, specifically methylates the adenine in position 37 of tRNA(1)(Val) (anticodon cmo5UAC). In Shewanella baltica (strain OS195), this protein is tRNA1(Val) (adenine(37)-N6)-methyltransferase.